Here is a 595-residue protein sequence, read N- to C-terminus: Quinoprotein alcohol dehydrogenase PedH (595 aa).

Residues 1 to 27 (MTRSPRRPLFAVSLVLSAMLLAGAAHA) form the signal peptide. Gln-87 is a binding site for pyrroloquinoline quinone. Cys-131 and Cys-132 are disulfide-bonded. Residues Arg-137, Ser-181, Gly-197, and Gly-198 each coordinate pyrroloquinoline quinone. Residue Glu-199 participates in Pr(3+) binding. Trp-263 serves as a coordination point for pyrroloquinoline quinone. Residues Asn-281, Asp-323, and Asp-325 each coordinate Pr(3+). Catalysis depends on Asp-323, which acts as the Proton acceptor. Positions 350, 417, 493, and 557 each coordinate pyrroloquinoline quinone.

The protein belongs to the bacterial PQQ dehydrogenase family. Pr(3+) is required as a cofactor. Requires Nd(3+) as cofactor. It depends on La(3+) as a cofactor. Ce(3+) serves as cofactor. The cofactor is Sm(3+). Pyrroloquinoline quinone is required as a cofactor. Post-translationally, the disulfide ring formed between the two adjacent cysteine residues Cys-131 and Cys-132 is essential for efficient electron transfer at pH 7 from PedH to its natural electron acceptor cytochrome c550.

The protein resides in the periplasm. The enzyme catalyses a primary alcohol + 2 Fe(III)-[cytochrome c] = an aldehyde + 2 Fe(II)-[cytochrome c] + 2 H(+). The catalysed reaction is ethanol + 2 Fe(III)-[cytochrome c] = acetaldehyde + 2 Fe(II)-[cytochrome c] + 2 H(+). It catalyses the reaction butan-1-ol + 2 Fe(III)-[cytochrome c] = butanal + 2 Fe(II)-[cytochrome c] + 2 H(+). It carries out the reaction butan-2-ol + 2 Fe(III)-[cytochrome c] = butan-2-one + 2 Fe(II)-[cytochrome c] + 2 H(+). The enzyme catalyses 2-phenylethanol + 2 Fe(III)-[cytochrome c] = 2-phenylacetaldehyde + 2 Fe(II)-[cytochrome c] + 2 H(+). The catalysed reaction is octan-1-ol + 2 Fe(III)-[cytochrome c] = octanal + 2 Fe(II)-[cytochrome c] + 2 H(+). It catalyses the reaction hexan-1-ol + 2 Fe(III)-[cytochrome c] = hexanal + 2 Fe(II)-[cytochrome c] + 2 H(+). It carries out the reaction cinnamyl alcohol + 2 Fe(III)-[cytochrome c] = cinnamaldehyde + 2 Fe(II)-[cytochrome c] + 2 H(+). The enzyme catalyses farnesol + 2 Fe(III)-[cytochrome c] = farnesal + 2 Fe(II)-[cytochrome c] + 2 H(+). The catalysed reaction is an aldehyde + 2 Fe(III)-[cytochrome c] + H2O = a carboxylate + 2 Fe(II)-[cytochrome c] + 3 H(+). It catalyses the reaction acetaldehyde + 2 Fe(III)-[cytochrome c] + H2O = 2 Fe(II)-[cytochrome c] + acetate + 3 H(+). It carries out the reaction butanal + 2 Fe(III)-[cytochrome c] + H2O = butanoate + 2 Fe(II)-[cytochrome c] + 3 H(+). The enzyme catalyses hexanal + 2 Fe(III)-[cytochrome c] + H2O = hexanoate + 2 Fe(II)-[cytochrome c] + 3 H(+). The catalysed reaction is octanal + 2 Fe(III)-[cytochrome c] + H2O = octanoate + 2 Fe(II)-[cytochrome c] + 3 H(+). Functionally, alcohol dehydrogenase that catalyzes the oxidation of a range of substrates, including linear and aromatic primary and secondary alcohols, as well as aldehydes, but only in the presence of lanthanides, allowing bacterial growth with a variety of volatile organic compounds (VOCs) as carbon and energy sources. Is also involved in the transcriptional regulation of pedE and pedH, most likely acting as a lanthanide sensory module. Uses a specific inducible cytochrome c550, encoded by the adjacent gene in the locus, as electron acceptor. The protein is Quinoprotein alcohol dehydrogenase PedH of Pseudomonas putida (strain ATCC 47054 / DSM 6125 / CFBP 8728 / NCIMB 11950 / KT2440).